A 557-amino-acid chain; its full sequence is Membrane protein insertase YidC (557 aa).

The next 5 helical transmembrane spans lie at 3–23 (IKRT…FDNW), 363–383 (FVGN…AVFF), 437–457 (LPVV…LASV), 476–496 (PYFI…KLNP), and 507–527 (MMFM…GLVL).

Belongs to the OXA1/ALB3/YidC family. Type 1 subfamily. As to quaternary structure, interacts with the Sec translocase complex via SecD. Specifically interacts with transmembrane segments of nascent integral membrane proteins during membrane integration.

Its subcellular location is the cell inner membrane. Required for the insertion and/or proper folding and/or complex formation of integral membrane proteins into the membrane. Involved in integration of membrane proteins that insert both dependently and independently of the Sec translocase complex, as well as at least some lipoproteins. Aids folding of multispanning membrane proteins. The protein is Membrane protein insertase YidC of Burkholderia thailandensis (strain ATCC 700388 / DSM 13276 / CCUG 48851 / CIP 106301 / E264).